The primary structure comprises 725 residues: Kelch domain-containing protein SSO1033 (725 aa).

The signal sequence occupies residues 1–28; the sequence is MKYGNMKKWAPLILFLFSLLLLQGISLH. 6 Kelch repeats span residues 59–100, 101–145, 146–199, 201–248, 250–297, and 299–342; these read SLYI…VYNN, TIYV…VYNN, AIYV…FNGT, LIIV…YYRG, LFIV…QVGN, and LYLA…VTLG. Fibronectin type-III domains are found at residues 323–410, 411–504, 505–583, and 585–665; these read PPLP…TPAS, VPNP…TKAS, VFAF…VVYY, and PPAS…TGDY.

The chain is Kelch domain-containing protein SSO1033 from Saccharolobus solfataricus (strain ATCC 35092 / DSM 1617 / JCM 11322 / P2) (Sulfolobus solfataricus).